Consider the following 122-residue polypeptide: Large ribosomal subunit protein uL14 (122 aa).

This sequence belongs to the universal ribosomal protein uL14 family. Part of the 50S ribosomal subunit. Forms a cluster with proteins L3 and L19. In the 70S ribosome, L14 and L19 interact and together make contacts with the 16S rRNA in bridges B5 and B8.

Binds to 23S rRNA. Forms part of two intersubunit bridges in the 70S ribosome. The chain is Large ribosomal subunit protein uL14 from Lawsonia intracellularis (strain PHE/MN1-00).